Consider the following 512-residue polypeptide: mRNA export factor (512 aa).

Residues 1–15 (MATDIDMLIDLGLDL) are compositionally biased toward low complexity. Positions 1–243 (MATDIDMLID…APERKAPAAD (243 aa)) are disordered. A Nuclear export signal motif is present at residues 5 to 17 (IDMLIDLGLDLSD). Phosphoserine; by host occurs at positions 16 and 18. Acidic residues-rich tracts occupy residues 16–26 (SDSDLDEDPPE) and 35–51 (LESD…EDME). The interaction with host ALYREF stretch occupies residues 104-112 (VWSRLGARR). Positions 110–138 (ARRPSCSPEQHGGKVARLQPPPTKAQPAR) match the Nuclear localization signal motif. Serine 114 carries the post-translational modification Phosphoserine; by host. The residue at position 138 (arginine 138) is a Dimethylated arginine; by host. Positions 138–152 (RGGRRGRRRGRGRGG) are RGG-box. The segment covering 139–149 (GGRRGRRRGRG) has biased composition (basic residues). Arginine 148 bears the Omega-N-methylarginine; by host mark. Arginine 150 carries the post-translational modification Dimethylated arginine; by host. Residues 214 to 233 (APPPLMTLAIAPPPADPRAP) show a composition bias toward pro residues. Positions 400, 479, 483, and 488 each coordinate Zn(2+). The segment at 400–488 (CYLKARGLCG…HRQECSSRVC (89 aa)) adopts a CHC2-type zinc-finger fold. The segment at 500–512 (YVHGKYFYCNSLF) is important for homodimerization.

The protein belongs to the HHV-1 ICP27 protein family. Homodimer. Interacts with host RBP1; this interaction facilitates the RNA polymerase recruitment to viral transcription sites. Interacts (via the RGG box) with host ALYREF/THOC4; this interaction recruits ALYREF to viral replication compartments and probably directs viral mRNA to the TAP/NFX1 pathway. Interacts with host ALYREF2. Interacts (via the RGG box) with host SRPK1; this interaction relocalizes SRPK1 to the nucleus and seems to alter its activity. Interacts with ICP4; this interaction modulates ICP4 DNA-binding activity. Interacts with host NXF1; this interaction allows efficient export of HHV-1 early and late transcripts. Post-translationally, methylated within the RGG box possibly by host PRMT1. When hypomethylated, ICP27 is exported to the cytoplasm earlier and more rapidly. In terms of processing, phosphorylated.

It localises to the host cytoplasm. The protein localises to the host nucleus. Its function is as follows. Multifunctional regulator of the expression of viral genes that contributes to the shutoff of host protein synthesis and mediates nuclear export of viral intronless mRNAs. Early in infection, this immediate early (EI) protein mediates the inhibition of cellular splicing. This results in the accumulation of unprocessed 3'end pre-mRNAs which can't be exported from the nucleus. Cellular protein synthesis is thereby shut off early after virus infection. Later in the infection, it helps recruit cellular RNA polymerase II to viral replication sites and promotes the nuclear export of viral intronless mRNAs by interacting with mRNAs and host NXF1/TAP. ICP27 binds to NUP62 which may provide facilitated viral mRNA export and may indirectly compete with some host cell transport receptors for binding and inhibit cellular nucleocytoplasmic transport pathways. Also stimulates translation of viral transcripts. Repression of host gene expression blocks the cell cycle at the G1 phase and prevents apoptosis. Seems to silence the 3' splice site of the promyelocytic leukemia (PML) intron 7a, thereby switching PML isoforms from PML-II to PML-V. This could be linked to the accelerated mRNA export induced by ICP27 which might not provide sufficient time for PML pre-mRNA to be spliced in the nucleus. The sequence is that of mRNA export factor from Homo sapiens (Human).